Reading from the N-terminus, the 441-residue chain is Probable D-serine dehydratase (441 aa).

K101 carries the N6-(pyridoxal phosphate)lysine modification.

Belongs to the serine/threonine dehydratase family. DsdA subfamily. Pyridoxal 5'-phosphate serves as cofactor.

It carries out the reaction D-serine = pyruvate + NH4(+). This Geobacillus kaustophilus (strain HTA426) protein is Probable D-serine dehydratase.